Here is a 177-residue protein sequence, read N- to C-terminus: ATP-dependent protease subunit HslV (177 aa).

The active site involves threonine 5. Positions 161, 164, and 167 each coordinate Na(+).

It belongs to the peptidase T1B family. HslV subfamily. As to quaternary structure, a double ring-shaped homohexamer of HslV is capped on each side by a ring-shaped HslU homohexamer. The assembly of the HslU/HslV complex is dependent on binding of ATP.

It localises to the cytoplasm. It catalyses the reaction ATP-dependent cleavage of peptide bonds with broad specificity.. Its activity is regulated as follows. Allosterically activated by HslU binding. Protease subunit of a proteasome-like degradation complex believed to be a general protein degrading machinery. The sequence is that of ATP-dependent protease subunit HslV from Campylobacter concisus (strain 13826).